A 251-amino-acid polypeptide reads, in one-letter code: Ubiquitin-conjugating enzyme E2 22 (251 aa).

In terms of domain architecture, UBC core spans 10 to 156; that stretch reads NVIKQLAKEL…ARLYTGIHAK (147 aa). The Glycyl thioester intermediate role is filled by cysteine 94. A compositionally biased stretch (basic and acidic residues) spans 230–240; sequence GLAKVQADKKK. Positions 230-251 are disordered; sequence GLAKVQADKKKVDARKKSLKRL. The stretch at 230–251 forms a coiled coil; the sequence is GLAKVQADKKKVDARKKSLKRL. The span at 241-251 shows a compositional bias: basic residues; the sequence is VDARKKSLKRL.

It belongs to the ubiquitin-conjugating enzyme family. Post-translationally, self-ubiquitinated. Expressed in seeds, pistils, siliques, hypocotyls and leaves.

The catalysed reaction is S-ubiquitinyl-[E1 ubiquitin-activating enzyme]-L-cysteine + [E2 ubiquitin-conjugating enzyme]-L-cysteine = [E1 ubiquitin-activating enzyme]-L-cysteine + S-ubiquitinyl-[E2 ubiquitin-conjugating enzyme]-L-cysteine.. Its pathway is protein modification; protein ubiquitination. Functionally, accepts the ubiquitin from the E1 complex and catalyzes its covalent attachment to other proteins. In Arabidopsis thaliana (Mouse-ear cress), this protein is Ubiquitin-conjugating enzyme E2 22 (UBC22).